Consider the following 191-residue polypeptide: Small ribosomal subunit protein uS7 (191 aa).

The tract at residues 56–80 is disordered; that stretch reads NKSGEQGDGDGESGGKAGGIKKRSL.

It belongs to the universal ribosomal protein uS7 family. In terms of assembly, part of the 30S ribosomal subunit. Contacts proteins S9 and S11.

Its function is as follows. One of the primary rRNA binding proteins, it binds directly to 16S rRNA where it nucleates assembly of the head domain of the 30S subunit. Is located at the subunit interface close to the decoding center, probably blocks exit of the E-site tRNA. The protein is Small ribosomal subunit protein uS7 of Coxiella burnetii (strain CbuK_Q154) (Coxiella burnetii (strain Q154)).